Consider the following 272-residue polypeptide: Universal stress protein MT2699 (272 aa).

ATP-binding positions include Gly15, Gly109 to Arg115, and Ser123 to Thr124.

It belongs to the universal stress protein A family.

This Mycobacterium tuberculosis (strain CDC 1551 / Oshkosh) protein is Universal stress protein MT2699.